The primary structure comprises 452 residues: Transcription factor ETV6 (452 aa).

N6-acetyllysine; alternate is present on K11. K11 is covalently cross-linked (Glycyl lysine isopeptide (Lys-Gly) (interchain with G-Cter in SUMO2); alternate). T18 carries the phosphothreonine modification. The residue at position 22 (S22) is a Phosphoserine. Residues 40–124 (ALRMEEDSIR…ELLQHILKQR (85 aa)) form the PNT domain. The tract at residues 154–262 (EDNGVQRTSR…PRPSSPRQEG (109 aa)) is disordered. Over residues 158 to 174 (VQRTSRPSAENVHQNPP) the composition is skewed to polar residues. S213, S238, and S257 each carry phosphoserine. Residue K288 forms a Glycyl lysine isopeptide (Lys-Gly) (interchain with G-Cter in SUMO2) linkage. The residue at position 302 (K302) is an N6-acetyllysine; alternate. K302 participates in a covalent cross-link: Glycyl lysine isopeptide (Lys-Gly) (interchain with G-Cter in SUMO2); alternate. Residue S323 is modified to Phosphoserine. The segment at residues 339–420 (RLLWDYVYQL…PGQRLLFRFM (82 aa)) is a DNA-binding region (ETS). Glycyl lysine isopeptide (Lys-Gly) (interchain with G-Cter in SUMO2) cross-links involve residues K403 and K421.

The protein belongs to the ETS family. As to quaternary structure, can form homodimers or heterodimers with TEL2 or FLI1. Interacts with L3MBTL1 and HDAC9.

The protein localises to the nucleus. In terms of biological role, transcriptional repressor; binds to the DNA sequence 5'-CCGGAAGT-3'. Plays a role in hematopoiesis and malignant transformation. This is Transcription factor ETV6 (ETV6) from Bos taurus (Bovine).